The following is a 135-amino-acid chain: Galectin-1 (135 aa).

Ala-2 carries the N-acetylalanine modification. One can recognise a Galectin domain in the interval 4–135; that stretch reads GLVASNLNLK…DFKIKCVAFE (132 aa). Lys-13, Lys-19, and Lys-29 each carry N6-acetyllysine. Ser-30 carries the post-translational modification Phosphoserine. A beta-D-galactoside is bound by residues 45–49, His-53, Asn-62, and 69–72; these read HFNPR and WGTE. An N6-acetyllysine; alternate modification is found at Lys-108. Lys-108 bears the N6-succinyllysine; alternate mark. Lys-128 is subject to N6-acetyllysine.

Homodimer. Binds LGALS3BP. Interacts with CD2, CD3, CD4, CD6, CD7, CD43, ALCAM and CD45. Interacts with laminin (via poly-N-acetyllactosamine). Interacts with SUSD2. Interacts with cargo receptor TMED10; the interaction mediates the translocation from the cytoplasm into the ERGIC (endoplasmic reticulum-Golgi intermediate compartment) and thereby secretion. Interacts with CD69.

The protein resides in the secreted. The protein localises to the extracellular space. It localises to the extracellular matrix. It is found in the cytoplasm. Functionally, lectin that binds beta-galactoside and a wide array of complex carbohydrates. Plays a role in regulating apoptosis, cell proliferation and cell differentiation. Inhibits CD45 protein phosphatase activity and therefore the dephosphorylation of Lyn kinase. Strong inducer of T-cell apoptosis. Plays a negative role in Th17 cell differentiation via activation of the receptor CD69. The sequence is that of Galectin-1 (Lgals1) from Mus musculus (Mouse).